The following is a 299-amino-acid chain: Very long chain fatty acid elongase 5 (299 aa).

The residue at position 1 (Met1) is an N-acetylmethionine. 7 consecutive transmembrane segments (helical) span residues Trp26–Val46, Ile64–Val84, Val112–Leu132, Ile139–Met158, Phe168–Ser187, Gly205–Cys225, and Phe227–Thr247.

Belongs to the ELO family. ELOVL5 subfamily. Interacts with TECR. As to expression, highly expressed in lung and brain.

The protein resides in the endoplasmic reticulum membrane. It localises to the cell projection. Its subcellular location is the dendrite. It carries out the reaction a very-long-chain acyl-CoA + malonyl-CoA + H(+) = a very-long-chain 3-oxoacyl-CoA + CO2 + CoA. It catalyses the reaction (6Z,9Z,12Z,15Z)-octadecatetraenoyl-CoA + malonyl-CoA + H(+) = (8Z,11Z,14Z,17Z)-3-oxoicosatetraenoyl-CoA + CO2 + CoA. The enzyme catalyses (6Z,9Z,12Z)-octadecatrienoyl-CoA + malonyl-CoA + H(+) = (8Z,11Z,14Z)-3-oxoeicosatrienoyl-CoA + CO2 + CoA. The catalysed reaction is (5Z,8Z,11Z,14Z,17Z)-eicosapentaenoyl-CoA + malonyl-CoA + H(+) = 3-oxo-(7Z,10Z,13Z,16Z,19Z)-docosapentaenoyl-CoA + CO2 + CoA. It carries out the reaction (5Z,8Z,11Z,14Z)-eicosatetraenoyl-CoA + malonyl-CoA + H(+) = (7Z,10Z,13Z,16Z)-3-oxodocosatetraenoyl-CoA + CO2 + CoA. It catalyses the reaction (9Z,12Z,15Z)-octadecatrienoyl-CoA + malonyl-CoA + H(+) = (11Z,14Z,17Z)-3-oxoeicosatrienoyl-CoA + CO2 + CoA. The enzyme catalyses (9Z)-hexadecenoyl-CoA + malonyl-CoA + H(+) = 3-oxo-(11Z)-octadecenoyl-CoA + CO2 + CoA. The catalysed reaction is (9Z)-octadecenoyl-CoA + malonyl-CoA + H(+) = 3-oxo-(11Z)-eicosenoyl-CoA + CO2 + CoA. It carries out the reaction (11Z)-octadecenoyl-CoA + malonyl-CoA + H(+) = 3-oxo-(13Z)-eicosenoyl-CoA + CO2 + CoA. It catalyses the reaction (9Z,12Z)-octadecadienoyl-CoA + malonyl-CoA + H(+) = (11Z,14Z)-3-oxoicosa-11,14-dienoyl-CoA + CO2 + CoA. It functions in the pathway lipid metabolism; polyunsaturated fatty acid biosynthesis. Functionally, catalyzes the first and rate-limiting reaction of the four reactions that constitute the long-chain fatty acids elongation cycle. This endoplasmic reticulum-bound enzymatic process allows the addition of 2 carbons to the chain of long- and very long-chain fatty acids (VLCFAs) per cycle. Condensing enzyme that acts specifically toward polyunsaturated acyl-CoA with the higher activity toward C18:3(n-6) acyl-CoA. May participate in the production of monounsaturated and of polyunsaturated VLCFAs of different chain lengths that are involved in multiple biological processes as precursors of membrane lipids and lipid mediators. In conditions where the essential linoleic and alpha linoleic fatty acids are lacking it is also involved in the synthesis of Mead acid from oleic acid. The polypeptide is Very long chain fatty acid elongase 5 (Rattus norvegicus (Rat)).